The following is a 434-amino-acid chain: UDP-glucose 6-dehydrogenase (434 aa).

NAD(+) is bound by residues 2–19 (NITF…GIIM), Val-11, Asp-30, Lys-35, Thr-121, and Glu-152. Substrate contacts are provided by residues 148–152 (EFLRE), Lys-204, Asn-208, 249–253 (FLNAG), and Gly-257. Cys-260 acts as the Nucleophile in catalysis. Residue Lys-263 participates in NAD(+) binding. Lys-321 serves as a coordination point for substrate. Arg-328 is a binding site for NAD(+).

Belongs to the UDP-glucose/GDP-mannose dehydrogenase family.

It catalyses the reaction UDP-alpha-D-glucose + 2 NAD(+) + H2O = UDP-alpha-D-glucuronate + 2 NADH + 3 H(+). The protein operates within nucleotide-sugar biosynthesis; UDP-alpha-D-glucuronate biosynthesis; UDP-alpha-D-glucuronate from UDP-alpha-D-glucose: step 1/1. The chain is UDP-glucose 6-dehydrogenase (udg) from Rickettsia typhi (strain ATCC VR-144 / Wilmington).